Here is a 493-residue protein sequence, read N- to C-terminus: Cytochrome P450 2E1 (493 aa).

298–303 (FAGTET) contributes to the substrate binding site. Position 437 (Cys-437) interacts with heme.

Belongs to the cytochrome P450 family. In terms of assembly, interacts with chaperones HSP70 and HSP90; this interaction is required for initial targeting to mitochondria. Heme is required as a cofactor.

It is found in the endoplasmic reticulum membrane. The protein resides in the microsome membrane. Its subcellular location is the mitochondrion inner membrane. It catalyses the reaction an organic molecule + reduced [NADPH--hemoprotein reductase] + O2 = an alcohol + oxidized [NADPH--hemoprotein reductase] + H2O + H(+). The enzyme catalyses (5Z,8Z,11Z)-eicosatrienoate + reduced [NADPH--hemoprotein reductase] + O2 = 19-hydroxy-(5Z,8Z,11Z)-eicosatrienoate + oxidized [NADPH--hemoprotein reductase] + H2O + H(+). The catalysed reaction is (5Z,8Z,11Z,14Z,17Z)-eicosapentaenoate + reduced [NADPH--hemoprotein reductase] + O2 = 19-hydroxy-(5Z,8Z,11Z,14Z,17Z)-eicosapentaenoate + oxidized [NADPH--hemoprotein reductase] + H2O + H(+). It carries out the reaction (4Z,7Z,10Z,13Z,16Z,19Z)-docosahexaenoate + reduced [NADPH--hemoprotein reductase] + O2 = 21-hydroxy-(4Z,7Z,10Z,13Z,16Z,19Z)-docosahexaenoate + oxidized [NADPH--hemoprotein reductase] + H2O + H(+). It catalyses the reaction dodecanoate + reduced [NADPH--hemoprotein reductase] + O2 = 11-hydroxydodecanoate + oxidized [NADPH--hemoprotein reductase] + H2O + H(+). The enzyme catalyses tetradecanoate + reduced [NADPH--hemoprotein reductase] + O2 = 13-hydroxytetradecanoate + oxidized [NADPH--hemoprotein reductase] + H2O + H(+). The catalysed reaction is 4-nitrophenol + NADPH + O2 + H(+) = 4-nitrocatechol + NADP(+) + H2O. It functions in the pathway lipid metabolism; fatty acid metabolism. With respect to regulation, the omega-1 hydroxylase activity is stimulated by cytochrome b5. Functionally, a cytochrome P450 monooxygenase involved in the metabolism of fatty acids. Mechanistically, uses molecular oxygen inserting one oxygen atom into a substrate, and reducing the second into a water molecule, with two electrons provided by NADPH via cytochrome P450 reductase (NADPH--hemoprotein reductase). Catalyzes the hydroxylation of carbon-hydrogen bonds. Hydroxylates fatty acids specifically at the omega-1 position displaying the highest catalytic activity for saturated fatty acids. May be involved in the oxidative metabolism of xenobiotics. The sequence is that of Cytochrome P450 2E1 (CYP2E1) from Macaca mulatta (Rhesus macaque).